The following is a 301-amino-acid chain: Probable alpha-L-glutamate ligase (301 aa).

The 184-residue stretch at 104–287 folds into the ATP-grasp domain; sequence LQLLARKGIG…VAGQLIDYIE (184 aa). Residues lysine 141, 178-179, aspartate 187, and 211-213 contribute to the ATP site; these read EF and RSN. Residues aspartate 248, glutamate 260, and asparagine 262 each coordinate Mg(2+). Residues aspartate 248, glutamate 260, and asparagine 262 each contribute to the Mn(2+) site.

It belongs to the RimK family. Mg(2+) serves as cofactor. The cofactor is Mn(2+).

This chain is Probable alpha-L-glutamate ligase, found in Maridesulfovibrio salexigens (strain ATCC 14822 / DSM 2638 / NCIMB 8403 / VKM B-1763) (Desulfovibrio salexigens).